A 129-amino-acid polypeptide reads, in one-letter code: UPF0102 protein Mnod_0024 (129 aa).

The protein belongs to the UPF0102 family.

The polypeptide is UPF0102 protein Mnod_0024 (Methylobacterium nodulans (strain LMG 21967 / CNCM I-2342 / ORS 2060)).